Here is a 261-residue protein sequence, read N- to C-terminus: Carnitinyl-CoA dehydratase (261 aa).

Glu111 functions as the Nucleophile in the catalytic mechanism. Glu131 (proton acceptor) is an active-site residue.

It belongs to the enoyl-CoA hydratase/isomerase family.

The catalysed reaction is (R)-carnitinyl-CoA = crotonobetainyl-CoA + H2O. The protein operates within amine and polyamine metabolism; carnitine metabolism. Functionally, catalyzes the reversible dehydration of L-carnitinyl-CoA to crotonobetainyl-CoA. In Salmonella enteritidis PT4 (strain P125109), this protein is Carnitinyl-CoA dehydratase.